A 107-amino-acid chain; its full sequence is Thioredoxin 1 (107 aa).

The region spanning 2-107 (SAAAQVTDST…TLSQTLEKHL (106 aa)) is the Thioredoxin domain. A disulfide bridge links Cys-32 with Cys-35.

It belongs to the thioredoxin family.

Participates in various redox reactions through the reversible oxidation of its active center dithiol to a disulfide and catalyzes dithiol-disulfide exchange reactions. This chain is Thioredoxin 1 (trxA), found in Nostoc sp. (strain PCC 7120 / SAG 25.82 / UTEX 2576).